The sequence spans 222 residues: N-(5'-phosphoribosyl)anthranilate isomerase (222 aa).

This sequence belongs to the TrpF family.

It carries out the reaction N-(5-phospho-beta-D-ribosyl)anthranilate = 1-(2-carboxyphenylamino)-1-deoxy-D-ribulose 5-phosphate. It participates in amino-acid biosynthesis; L-tryptophan biosynthesis; L-tryptophan from chorismate: step 3/5. This chain is N-(5'-phosphoribosyl)anthranilate isomerase, found in Brevibacillus brevis (strain 47 / JCM 6285 / NBRC 100599).